Reading from the N-terminus, the 568-residue chain is Phosphoprotein (568 aa).

Residues 1–25 (MDQDAFFSERDPEAEGETPRKQESL) form a disordered region. Over residues 7–24 (FSERDPEAEGETPRKQES) the composition is skewed to basic and acidic residues. The N0 binding stretch occupies residues 33–41 (DVVLSYKPT). The segment at 55-322 (DNSKENKPSC…TTANEEGTSN (268 aa)) is disordered. Composition is skewed to basic and acidic residues over residues 56–105 (NSKE…HARI), 132–144 (RNTR…PNER), 151–167 (PTDE…KREE), and 175–190 (EEVR…REGR). A compositionally biased stretch (polar residues) spans 191–216 (TNNNGRSMETSSTHSTRITDVITNPS). Residues 239–265 (TRSERTQNSELHKSTSEDSSNLEDHNT) show a composition bias toward basic and acidic residues. Residues 294–304 (YTTNNANNNTK) are compositionally biased toward low complexity. The multimerization stretch occupies residues 344–411 (FELSRSASHV…SSRDLHKRFS (68 aa)). Residues 387 to 416 (EENRTLLKQIQEEIDSSRDLHKRFSEYQKE) adopt a coiled-coil conformation. The tract at residues 412–445 (EYQKEQNSLMMANLSTLHIITDRGGKTGDPSDTT) is l protein binding. Disordered stretches follow at residues 434 to 455 (RGGK…TKGK) and 494 to 513 (VLEE…LIPS). A compositionally biased stretch (polar residues) spans 441–450 (PSDTTRSPSV). The tract at residues 479 to 568 (DLIREDELRD…FEEDIDSLTN (90 aa)) is interaction with the nucleocapsid (N-RNA).

The protein belongs to the respirovirus P protein family. Homotetramer. Interacts (via multimerization domain) with polymerase L; this interaction forms the polymerase complex. Interacts (via N-terminus) with N0; this interaction allows P to chaperon N0 before encapsidation and form the N-P complex. Interacts (via C-terminus) with N-RNA template; this interaction positions the polymerase on the template.

In terms of biological role, essential cofactor of the RNA polymerase L that plays a central role in the transcription and replication by forming the polymerase complex with RNA polymerase L and recruiting L to the genomic N-RNA template for RNA synthesis. Also plays a central role in the encapsidation of nascent RNA chains by forming the encapsidation complex with the nucleocapsid protein N (N-P complex). Acts as a chaperone for newly synthesized free N protein, so-called N0, allowing encapsidation of nascent RNA chains during replication. The nucleoprotein protein N prevents excessive phosphorylation of P, which leads to down-regulation of viral transcription/ replication. Participates, together with N, in the formation of viral factories (viroplasms), which are large inclusions in the host cytoplasm where replication takes place. Recruits host PI4KB and remodel the host endoplasmic reticulum membrane to form viral replication factories. In Human parainfluenza 1 virus (strain CI-5/73) (HPIV-1), this protein is Phosphoprotein (P/C).